Here is a 293-residue protein sequence, read N- to C-terminus: Undecaprenyl-diphosphatase (293 aa).

The next 7 helical transmembrane spans lie at 3-23 (IALA…EFLP), 43-63 (KGKI…CWEF), 85-105 (INVI…GKAI), 109-129 (LFNP…ILWA), 203-223 (VATE…TVYE), 238-258 (IFAV…RWLL), and 269-289 (FAWY…THLI).

The protein belongs to the UppP family.

Its subcellular location is the cell inner membrane. The catalysed reaction is di-trans,octa-cis-undecaprenyl diphosphate + H2O = di-trans,octa-cis-undecaprenyl phosphate + phosphate + H(+). Functionally, catalyzes the dephosphorylation of undecaprenyl diphosphate (UPP). Confers resistance to bacitracin. The polypeptide is Undecaprenyl-diphosphatase (Ralstonia pickettii (strain 12J)).